The following is a 118-amino-acid chain: Large ribosomal subunit protein bL20 (118 aa).

Belongs to the bacterial ribosomal protein bL20 family.

Binds directly to 23S ribosomal RNA and is necessary for the in vitro assembly process of the 50S ribosomal subunit. It is not involved in the protein synthesizing functions of that subunit. The protein is Large ribosomal subunit protein bL20 of Pelagibacter ubique (strain HTCC1062).